Consider the following 664-residue polypeptide: Phosphomethylpyrimidine synthase (664 aa).

Substrate-binding positions include Asn-235, Met-264, Tyr-293, His-329, 349-351 (SRG), 390-393 (DGMR), and Glu-429. His-433 contacts Zn(2+). Tyr-456 provides a ligand contact to substrate. Position 497 (His-497) interacts with Zn(2+). [4Fe-4S] cluster contacts are provided by Cys-577, Cys-580, and Cys-585.

It belongs to the ThiC family. As to quaternary structure, homodimer. Requires [4Fe-4S] cluster as cofactor.

It carries out the reaction 5-amino-1-(5-phospho-beta-D-ribosyl)imidazole + S-adenosyl-L-methionine = 4-amino-2-methyl-5-(phosphooxymethyl)pyrimidine + CO + 5'-deoxyadenosine + formate + L-methionine + 3 H(+). Its pathway is cofactor biosynthesis; thiamine diphosphate biosynthesis. Catalyzes the synthesis of the hydroxymethylpyrimidine phosphate (HMP-P) moiety of thiamine from aminoimidazole ribotide (AIR) in a radical S-adenosyl-L-methionine (SAM)-dependent reaction. The polypeptide is Phosphomethylpyrimidine synthase (Shewanella amazonensis (strain ATCC BAA-1098 / SB2B)).